Reading from the N-terminus, the 252-residue chain is Type III pantothenate kinase (252 aa).

6–13 lines the ATP pocket; it reads DIGNTSTA. 104-107 is a binding site for substrate; sequence GADR. Asp-106 acts as the Proton acceptor in catalysis. Asp-128 contributes to the K(+) binding site. Residue Thr-131 participates in ATP binding. Residue Thr-183 participates in substrate binding.

It belongs to the type III pantothenate kinase family. As to quaternary structure, homodimer. NH4(+) is required as a cofactor. The cofactor is K(+).

The protein localises to the cytoplasm. The catalysed reaction is (R)-pantothenate + ATP = (R)-4'-phosphopantothenate + ADP + H(+). It functions in the pathway cofactor biosynthesis; coenzyme A biosynthesis; CoA from (R)-pantothenate: step 1/5. Functionally, catalyzes the phosphorylation of pantothenate (Pan), the first step in CoA biosynthesis. In Thermus thermophilus (strain ATCC BAA-163 / DSM 7039 / HB27), this protein is Type III pantothenate kinase.